The primary structure comprises 357 residues: Zinc finger protein 830 (357 aa).

The segment at 47–69 (CVVCNIQIKSELLWPAHILGKQH) adopts a C2H2-type zinc-finger fold. Disordered regions lie at residues 98 to 126 (RKGSEPENQESKRIKGTEDQPTALKTKLP), 157 to 194 (DDDEVEGEEYENVNEASTSLQKPAEIPLPPPTSSADRL), and 231 to 255 (ALPEGFFDDPEADAKVRKVDAPKDQ). Basic and acidic residues predominate over residues 99–115 (KGSEPENQESKRIKGTE). A compositionally biased stretch (acidic residues) spans 157–168 (DDDEVEGEEYEN). Positions 242–255 (ADAKVRKVDAPKDQ) are enriched in basic and acidic residues. Residues 279–325 (AEEDEEGRLDRQIDEIDEQIECYRRVEHLRDLKDTLQDAKMEVLKSK) are a coiled coil.

Its subcellular location is the nucleus. It localises to the chromosome. The protein localises to the nucleus speckle. In terms of biological role, may act as an important regulator of the cell cycle that participates in the maintenance of genome integrity. The polypeptide is Zinc finger protein 830 (Xenopus tropicalis (Western clawed frog)).